Here is a 326-residue protein sequence, read N- to C-terminus: tRNA uridine(34) hydroxylase (326 aa).

The Rhodanese domain maps to 123-217; sequence SDPDVLLVDT…YLEEVPEENS (95 aa). Residue Cys-177 is the Cysteine persulfide intermediate of the active site. Positions 276 to 320 are enriched in basic and acidic residues; it reads EEQKSRFREREKQVQLANERGETHVGGDAAKLIEQRKQEKKEKKQ. The disordered stretch occupies residues 276 to 326; sequence EEQKSRFREREKQVQLANERGETHVGGDAAKLIEQRKQEKKEKKQQQRSSK.

The protein belongs to the TrhO family.

The catalysed reaction is uridine(34) in tRNA + AH2 + O2 = 5-hydroxyuridine(34) in tRNA + A + H2O. In terms of biological role, catalyzes oxygen-dependent 5-hydroxyuridine (ho5U) modification at position 34 in tRNAs. This is tRNA uridine(34) hydroxylase from Aliivibrio salmonicida (strain LFI1238) (Vibrio salmonicida (strain LFI1238)).